Reading from the N-terminus, the 119-residue chain is Ribosome-binding factor A (119 aa).

It belongs to the RbfA family. Monomer. Binds 30S ribosomal subunits, but not 50S ribosomal subunits or 70S ribosomes.

It is found in the cytoplasm. Its function is as follows. One of several proteins that assist in the late maturation steps of the functional core of the 30S ribosomal subunit. Associates with free 30S ribosomal subunits (but not with 30S subunits that are part of 70S ribosomes or polysomes). Required for efficient processing of 16S rRNA. May interact with the 5'-terminal helix region of 16S rRNA. This Chlorobium limicola (strain DSM 245 / NBRC 103803 / 6330) protein is Ribosome-binding factor A.